Here is a 518-residue protein sequence, read N- to C-terminus: Arrestin-related trafficking adapter 10 (518 aa).

Residue Lys-118 forms a Glycyl lysine isopeptide (Lys-Gly) (interchain with G-Cter in ubiquitin) linkage.

The protein belongs to the ART10 family. Interacts with RSP5. In terms of processing, ubiquitinated by RSP5.

It localises to the cytoplasm. In terms of biological role, may regulate endocytosis by recruiting RSP5 ubiquitin ligase activity to specific plasma membrane proteins in response to extracellular stimuli. The protein is Arrestin-related trafficking adapter 10 (ART10) of Saccharomyces cerevisiae (strain Lalvin EC1118 / Prise de mousse) (Baker's yeast).